The primary structure comprises 410 residues: Putative transposase Rv3428c (410 aa).

Residues 40-220 form the Integrase catalytic domain; the sequence is VPRGPVDAGS…QPLRMFEAVE (181 aa). The segment at 390 to 410 is disordered; that stretch reads AANEPTTSSPASTAGGVPARP.

It belongs to the transposase IS21/IS408/IS1162 family.

The protein is Putative transposase Rv3428c of Mycobacterium tuberculosis (strain ATCC 25618 / H37Rv).